The chain runs to 422 residues: 4-hydroxy-3-methylbut-2-en-1-yl diphosphate synthase (flavodoxin) (422 aa).

The [4Fe-4S] cluster site is built by Cys-316, Cys-319, Cys-362, and Glu-369.

It belongs to the IspG family. It depends on [4Fe-4S] cluster as a cofactor.

It carries out the reaction (2E)-4-hydroxy-3-methylbut-2-enyl diphosphate + oxidized [flavodoxin] + H2O + 2 H(+) = 2-C-methyl-D-erythritol 2,4-cyclic diphosphate + reduced [flavodoxin]. It participates in isoprenoid biosynthesis; isopentenyl diphosphate biosynthesis via DXP pathway; isopentenyl diphosphate from 1-deoxy-D-xylulose 5-phosphate: step 5/6. Functionally, converts 2C-methyl-D-erythritol 2,4-cyclodiphosphate (ME-2,4cPP) into 1-hydroxy-2-methyl-2-(E)-butenyl 4-diphosphate. This chain is 4-hydroxy-3-methylbut-2-en-1-yl diphosphate synthase (flavodoxin), found in Anaplasma marginale (strain St. Maries).